The primary structure comprises 108 residues: Protein YcgL (108 aa).

Positions 12–96 (MFCVIYRSSK…PPEDLLKQHL (85 aa)) constitute a YcgL domain.

The protein is Protein YcgL of Shigella sonnei (strain Ss046).